The chain runs to 309 residues: MITFLPTIFSILVVVIFVIGNFGNGFIALVNSIEWVKRQKISFADQILTALAVSRVGLLWALLLNWYSTVFNPAFYSVGVRTTVYDVWTVTGHFSNWLATSLSIFYLLKIANFSNLIFLHLKRRVKSVILVMLLGPLLFLACQLFVINMKEILRTKEYEGNMTWKIKLRSAMYLSDATITTLANLVPFTLTLLSFLLLICSLCKHLNKMQLHGKGSQDPSTKVHIKVLQTVISFLLLCAIYFLSIMISVWSFGSLENKPVFMFCKAIRFSYPSIHPFILIWGNKKLKQTFLSVLRQVRYWVKGEKPSSP.

The Extracellular segment spans residues 1–2 (MI). A helical membrane pass occupies residues 3–23 (TFLPTIFSILVVVIFVIGNFG). The Cytoplasmic portion of the chain corresponds to 24 to 55 (NGFIALVNSIEWVKRQKISFADQILTALAVSR). A helical membrane pass occupies residues 56-76 (VGLLWALLLNWYSTVFNPAFY). Residues 77–100 (SVGVRTTVYDVWTVTGHFSNWLAT) lie on the Extracellular side of the membrane. A helical transmembrane segment spans residues 101 to 121 (SLSIFYLLKIANFSNLIFLHL). Residues 122–126 (KRRVK) are Cytoplasmic-facing. The helical transmembrane segment at 127-147 (SVILVMLLGPLLFLACQLFVI) threads the bilayer. Residues 148 to 181 (NMKEILRTKEYEGNMTWKIKLRSAMYLSDATITT) lie on the Extracellular side of the membrane. Residue asparagine 161 is glycosylated (N-linked (GlcNAc...) asparagine). The chain crosses the membrane as a helical span at residues 182 to 202 (LANLVPFTLTLLSFLLLICSL). The Cytoplasmic segment spans residues 203–229 (CKHLNKMQLHGKGSQDPSTKVHIKVLQ). Residues 230–250 (TVISFLLLCAIYFLSIMISVW) traverse the membrane as a helical segment. The Extracellular segment spans residues 251-259 (SFGSLENKP). A helical transmembrane segment spans residues 260-280 (VFMFCKAIRFSYPSIHPFILI). The Cytoplasmic segment spans residues 281 to 309 (WGNKKLKQTFLSVLRQVRYWVKGEKPSSP).

This sequence belongs to the G-protein coupled receptor T2R family.

The protein resides in the membrane. In terms of biological role, receptor that may play a role in the perception of bitterness and is gustducin-linked. May play a role in sensing the chemical composition of the gastrointestinal content. The activity of this receptor may stimulate alpha gustducin, mediate PLC-beta-2 activation and lead to the gating of TRPM5. This is Taste receptor type 2 member 31 (TAS2R31) from Pongo pygmaeus (Bornean orangutan).